Consider the following 493-residue polypeptide: NADH-ubiquinone oxidoreductase 51 kDa subunit, mitochondrial (493 aa).

The N-terminal 27 residues, Met1–Phe27, are a transit peptide targeting the mitochondrion. Position 96-105 (Gly96–Gly105) interacts with NAD(+). Gly212 to Thr259 is a binding site for FMN. [4Fe-4S] cluster is bound by residues Cys391, Cys394, Cys397, and Cys437.

It belongs to the complex I 51 kDa subunit family. Complex I is composed of about 40 different subunits. This is a component of the flavoprotein-sulfur (FP) fragment of the enzyme. Requires FMN as cofactor. [4Fe-4S] cluster is required as a cofactor.

The protein localises to the mitochondrion inner membrane. The catalysed reaction is a ubiquinone + NADH + 5 H(+)(in) = a ubiquinol + NAD(+) + 4 H(+)(out). Core subunit of the mitochondrial membrane respiratory chain NADH dehydrogenase (Complex I) that is believed to belong to the minimal assembly required for catalysis. Complex I functions in the transfer of electrons from NADH to the respiratory chain. The immediate electron acceptor for the enzyme is believed to be ubiquinone. This Neurospora crassa (strain ATCC 24698 / 74-OR23-1A / CBS 708.71 / DSM 1257 / FGSC 987) protein is NADH-ubiquinone oxidoreductase 51 kDa subunit, mitochondrial (nuo-51).